Reading from the N-terminus, the 246-residue chain is Small ribosomal subunit protein uS2 (246 aa).

This sequence belongs to the universal ribosomal protein uS2 family.

The protein is Small ribosomal subunit protein uS2 of Burkholderia pseudomallei (strain 668).